Consider the following 505-residue polypeptide: Protein nucleotidyltransferase YdiU (505 aa).

Residues glycine 102, glycine 104, arginine 105, lysine 125, aspartate 137, glycine 138, arginine 188, and arginine 195 each coordinate ATP. Aspartate 264 functions as the Proton acceptor in the catalytic mechanism. Mg(2+) contacts are provided by asparagine 265 and aspartate 274. Position 274 (aspartate 274) interacts with ATP. Residues 485 to 505 (FADYGKPPAPGEEVQQTFCGT) are disordered.

The protein belongs to the SELO family. Requires Mg(2+) as cofactor. It depends on Mn(2+) as a cofactor.

The enzyme catalyses L-seryl-[protein] + ATP = 3-O-(5'-adenylyl)-L-seryl-[protein] + diphosphate. The catalysed reaction is L-threonyl-[protein] + ATP = 3-O-(5'-adenylyl)-L-threonyl-[protein] + diphosphate. It carries out the reaction L-tyrosyl-[protein] + ATP = O-(5'-adenylyl)-L-tyrosyl-[protein] + diphosphate. It catalyses the reaction L-histidyl-[protein] + UTP = N(tele)-(5'-uridylyl)-L-histidyl-[protein] + diphosphate. The enzyme catalyses L-seryl-[protein] + UTP = O-(5'-uridylyl)-L-seryl-[protein] + diphosphate. The catalysed reaction is L-tyrosyl-[protein] + UTP = O-(5'-uridylyl)-L-tyrosyl-[protein] + diphosphate. Nucleotidyltransferase involved in the post-translational modification of proteins. It can catalyze the addition of adenosine monophosphate (AMP) or uridine monophosphate (UMP) to a protein, resulting in modifications known as AMPylation and UMPylation. In Nitrobacter hamburgensis (strain DSM 10229 / NCIMB 13809 / X14), this protein is Protein nucleotidyltransferase YdiU.